The following is a 91-amino-acid chain: Small ribosomal subunit protein uS15 (91 aa).

This sequence belongs to the universal ribosomal protein uS15 family. Part of the 30S ribosomal subunit. Forms a bridge to the 50S subunit in the 70S ribosome, contacting the 23S rRNA.

In terms of biological role, one of the primary rRNA binding proteins, it binds directly to 16S rRNA where it helps nucleate assembly of the platform of the 30S subunit by binding and bridging several RNA helices of the 16S rRNA. Forms an intersubunit bridge (bridge B4) with the 23S rRNA of the 50S subunit in the ribosome. This Synechococcus sp. (strain JA-3-3Ab) (Cyanobacteria bacterium Yellowstone A-Prime) protein is Small ribosomal subunit protein uS15.